The following is a 250-amino-acid chain: Ubiquinone/menaquinone biosynthesis C-methyltransferase UbiE (250 aa).

Residues Thr73, Asp94, 122–123 (NS), and Ser139 contribute to the S-adenosyl-L-methionine site.

Belongs to the class I-like SAM-binding methyltransferase superfamily. MenG/UbiE family.

The catalysed reaction is a 2-demethylmenaquinol + S-adenosyl-L-methionine = a menaquinol + S-adenosyl-L-homocysteine + H(+). It carries out the reaction a 2-methoxy-6-(all-trans-polyprenyl)benzene-1,4-diol + S-adenosyl-L-methionine = a 5-methoxy-2-methyl-3-(all-trans-polyprenyl)benzene-1,4-diol + S-adenosyl-L-homocysteine + H(+). Its pathway is quinol/quinone metabolism; menaquinone biosynthesis; menaquinol from 1,4-dihydroxy-2-naphthoate: step 2/2. It participates in cofactor biosynthesis; ubiquinone biosynthesis. Methyltransferase required for the conversion of demethylmenaquinol (DMKH2) to menaquinol (MKH2) and the conversion of 2-polyprenyl-6-methoxy-1,4-benzoquinol (DDMQH2) to 2-polyprenyl-3-methyl-6-methoxy-1,4-benzoquinol (DMQH2). In Wigglesworthia glossinidia brevipalpis, this protein is Ubiquinone/menaquinone biosynthesis C-methyltransferase UbiE.